The sequence spans 596 residues: Fc receptor-like protein 5 (596 aa).

An N-terminal signal peptide occupies residues 1–26 (MSGSFSPCVVFTQMWLTLLVVTPVNG). The Extracellular segment spans residues 27-496 (QHEAAQQSVV…MTKNRSVPMA (470 aa)). 5 Ig-like C2-type domains span residues 34–115 (SVVS…VEFS), 106–199 (PSMH…NTVV), 207–294 (PRPV…TAFI), 296–384 (PVQR…SFVS), and 398–483 (PVLT…IRIS). 3 disulfide bridges follow: Cys-55/Cys-99, Cys-137/Cys-181, and Cys-228/Cys-277. Asn-324 carries an N-linked (GlcNAc...) asparagine glycan. Disulfide bonds link Cys-325/Cys-373 and Cys-419/Cys-466. Asn-436 carries an N-linked (GlcNAc...) asparagine glycan. A helical membrane pass occupies residues 497 to 517 (AGITVGLLIMAVGVFLFYCWF). The Cytoplasmic segment spans residues 518-596 (SRKAGGKPTS…RSRCQMAEKK (79 aa)). Disordered stretches follow at residues 522–544 (GGKP…PTYY) and 561–596 (EENV…AEKK). A compositionally biased stretch (basic and acidic residues) spans 577–596 (KHADQESESPRSRCQMAEKK).

In terms of assembly, interacts with CR2. Interacts with CD19. In terms of processing, phosphorylated on cytoplasmic tyrosines; required for interaction with protein tyrosine phosphatases and protein tyrosine kinases. As to expression, preferentially expressed in marginal zone B cells.

The protein localises to the cell membrane. Plays an important role in B-cell response to antigen that acts both as a negative or positive coreceptor. Inhibits B-cell receptor (BCR) signaling in the absence of CR2 stimulation but engagement with CR2 and the BCR lead to a superior calcium response compared to CR2 and BCR costimulation. May be involved in B-cell development and differentiation in peripheral lymphoid organs and may be useful markers of B-cell stages. May have an immunoregulatory role in marginal zone B-cells. May play a role in fertilization. In Mus musculus (Mouse), this protein is Fc receptor-like protein 5 (Fcrl5).